A 1034-amino-acid polypeptide reads, in one-letter code: Enteropeptidase (1034 aa).

Residues 1–51 (MGSKRIIPSRHRSLSTYEVMFTALFAILMVLCAGLIAVSWLTIKGSEKDAA) constitute a propeptide that is removed on maturation. Topologically, residues 2 to 18 (GSKRIIPSRHRSLSTYE) are cytoplasmic. Residues 19 to 47 (VMFTALFAILMVLCAGLIAVSWLTIKGSE) form a helical; Signal-anchor for type II membrane protein membrane-spanning segment. At 48-1034 (KDAALGKSHE…FTEWIQSFLH (987 aa)) the chain is on the extracellular side. Residues 54–169 (KSHEARGTMK…NSIDITESLE (116 aa)) enclose the SEA domain. N116, N147, N170, and N194 each carry an N-linked (GlcNAc...) asparagine glycan. The LDL-receptor class A 1 domain maps to 197–238 (IECLPGSRPCADALKCIAVDLFCDGELNCPDGSDEDSKICAT). Intrachain disulfides connect C199/C212, C206/C225, C219/C236, and C240/C268. A CUB 1 domain is found at 240 to 349 (CDGKFLLTES…IGFNATYTAF (110 aa)). N-linked (GlcNAc...) asparagine glycans are attached at residues N283, N343, N350, N403, N455, N485, N518, N549, and N645. In terms of domain architecture, MAM spans 357–519 (DEKINCNFED…ISLTYGICNV (163 aa)). The cysteines at positions 539 and 567 are disulfide-linked. The CUB 2 domain maps to 539–649 (CGGPFELWEP…GGFKANFTTG (111 aa)). Residues 656 to 694 (EPCKEDNFQCENGECVLLVNLCDGFSHCKDGSDEAHCVR) enclose the LDL-receptor class A 2 domain. 3 cysteine pairs are disulfide-bonded: C658/C670, C665/C683, and C677/C692. An SRCR domain is found at 693–786 (VRFLNGTANN…LILLQCNHKS (94 aa)). Residues N697, N701, N721, N740, and N761 are each glycosylated (N-linked (GlcNAc...) asparagine). Disulfide bonds link C772/C782, C787/C911, C825/C841, C925/C992, C956/C971, and C982/C1010. The Peptidase S1 domain occupies 800–1034 (IVGGNDSREG…FTEWIQSFLH (235 aa)). N-linked (GlcNAc...) asparagine glycosylation is present at N804. The active-site Charge relay system is the H840. N-linked (GlcNAc...) asparagine glycosylation is present at N863. The active-site Charge relay system is D891. N-linked (GlcNAc...) asparagine glycosylation is found at N902 and N964. The Charge relay system role is filled by S986.

Belongs to the peptidase S1 family. In terms of assembly, heterotrimer of a catalytic (light) chain, a multidomain (heavy) chain, and a mini chain. In terms of processing, the chains are derived from a single precursor that is cleaved by a trypsin-like protease. Post-translationally, the mini chain may be cleaved by elastase.

The protein localises to the membrane. The enzyme catalyses Activation of trypsinogen by selective cleavage of 6-Lys-|-Ile-7 bond.. In terms of biological role, responsible for initiating activation of pancreatic proteolytic proenzymes (trypsin, chymotrypsin and carboxypeptidase A). It catalyzes the conversion of trypsinogen to trypsin which in turn activates other proenzymes including chymotrypsinogen, procarboxypeptidases, and proelastases. The sequence is that of Enteropeptidase (TMPRSS15) from Sus scrofa (Pig).